The primary structure comprises 337 residues: PHD finger protein 11 (337 aa).

Residues 42 to 78 form a C2HC pre-PHD-type zinc finger; the sequence is KRICALCPKDLECSVLYFAQSENIAAHENCLLYSSAL. The PHD-type zinc-finger motif lies at 108–160; it reads LKCTFCGKKGATVGCDLKSCFKNYHFFCAKNDHAVLQADGRTGIYKVFCQQHA.

As to quaternary structure, interacts with BRCA1 and RELA.

The protein resides in the nucleus. Its function is as follows. Positive regulator of Th1-type cytokine gene expression. The chain is PHD finger protein 11 (PHF11) from Bos taurus (Bovine).